The chain runs to 231 residues: Endo-1,4-beta-xylanase A (231 aa).

The first 19 residues, 1 to 19, serve as a signal peptide directing secretion; that stretch reads MVSFKSLLVAVSALTGALA. An N-linked (GlcNAc...) asparagine glycan is attached at Asn32. A GH11 domain is found at 41 to 229; that stretch reads QVTGNSEGYH…SSGSSSIYVQ (189 aa). Glu125 functions as the Nucleophile in the catalytic mechanism. The active-site Proton donor is Glu216.

It belongs to the glycosyl hydrolase 11 (cellulase G) family.

The protein resides in the secreted. The enzyme catalyses Endohydrolysis of (1-&gt;4)-beta-D-xylosidic linkages in xylans.. It functions in the pathway glycan degradation; xylan degradation. With respect to regulation, inhibited by the proteinaceous endoxylanase inhibitor I from T.aestivum (TAXI-I). In terms of biological role, endo-1,4-beta-xylanase involved in the hydrolysis of xylan, a major structural heterogeneous polysaccharide found in plant biomass representing the second most abundant polysaccharide in the biosphere, after cellulose. Plays an important role in causing fusarium head blight (FHB) on cereal crops. The sequence is that of Endo-1,4-beta-xylanase A (XYLA) from Gibberella zeae (strain ATCC MYA-4620 / CBS 123657 / FGSC 9075 / NRRL 31084 / PH-1) (Wheat head blight fungus).